The primary structure comprises 170 residues: Transcriptional repressor NrdR (170 aa).

Residues 3–34 (CPFCGTQDTKVVDSRLVSEGAQVRRRRTCIHC) fold into a zinc finger. Positions 49–139 (PKLIKSDGSR…VYRSFKDISE (91 aa)) constitute an ATP-cone domain. Residues 151-170 (SVSIPKSKKTAPESKKEDQA) form a disordered region. Residues 160–170 (TAPESKKEDQA) are compositionally biased toward basic and acidic residues.

It belongs to the NrdR family. Requires Zn(2+) as cofactor.

In terms of biological role, negatively regulates transcription of bacterial ribonucleotide reductase nrd genes and operons by binding to NrdR-boxes. This is Transcriptional repressor NrdR from Marinomonas sp. (strain MWYL1).